The primary structure comprises 336 residues: Fructose-1,6-bisphosphatase class 1 (336 aa).

Residues Glu-90, Asp-112, Leu-114, and Asp-115 each coordinate Mg(2+). Substrate contacts are provided by residues 115-118 (DGSS), Asn-211, and Lys-277. Residue Glu-283 coordinates Mg(2+).

The protein belongs to the FBPase class 1 family. As to quaternary structure, homotetramer. Mg(2+) is required as a cofactor.

The protein localises to the cytoplasm. It carries out the reaction beta-D-fructose 1,6-bisphosphate + H2O = beta-D-fructose 6-phosphate + phosphate. It functions in the pathway carbohydrate biosynthesis; gluconeogenesis. This chain is Fructose-1,6-bisphosphatase class 1, found in Pseudomonas savastanoi pv. phaseolicola (strain 1448A / Race 6) (Pseudomonas syringae pv. phaseolicola (strain 1448A / Race 6)).